Here is a 134-residue protein sequence, read N- to C-terminus: Small ribosomal subunit protein uS12 (134 aa).

Asp-89 carries the post-translational modification 3-methylthioaspartic acid. Positions Thr-101–Lys-134 are disordered. Residues Gly-125–Lys-134 are compositionally biased toward low complexity.

The protein belongs to the universal ribosomal protein uS12 family. Part of the 30S ribosomal subunit. Contacts proteins S8 and S17. May interact with IF1 in the 30S initiation complex.

In terms of biological role, with S4 and S5 plays an important role in translational accuracy. Functionally, interacts with and stabilizes bases of the 16S rRNA that are involved in tRNA selection in the A site and with the mRNA backbone. Located at the interface of the 30S and 50S subunits, it traverses the body of the 30S subunit contacting proteins on the other side and probably holding the rRNA structure together. The combined cluster of proteins S8, S12 and S17 appears to hold together the shoulder and platform of the 30S subunit. The chain is Small ribosomal subunit protein uS12 from Gemmatimonas aurantiaca (strain DSM 14586 / JCM 11422 / NBRC 100505 / T-27).